A 75-amino-acid polypeptide reads, in one-letter code: U14-hexatoxin-Mg1a (75 aa).

The signal sequence occupies residues 1-19 (MKLTLFILIVFVVLANVYA). Positions 20 to 31 (AGISERNIIGGR) are excised as a propeptide.

In terms of processing, contains 4 disulfide bonds. In terms of tissue distribution, expressed by the venom gland.

Its subcellular location is the secreted. Functionally, no toxicity is observed upon intracranial injection into mice and intrathorax injection into crickets. The sequence is that of U14-hexatoxin-Mg1a from Macrothele gigas (Japanese funnel web spider).